The chain runs to 153 residues: Ribosome maturation factor RimP (153 aa).

Belongs to the RimP family.

It localises to the cytoplasm. In terms of biological role, required for maturation of 30S ribosomal subunits. In Clostridium botulinum (strain ATCC 19397 / Type A), this protein is Ribosome maturation factor RimP.